Consider the following 246-residue polypeptide: DNA repair protein RecO (246 aa).

It belongs to the RecO family.

Its function is as follows. Involved in DNA repair and RecF pathway recombination. The chain is DNA repair protein RecO from Methylorubrum populi (strain ATCC BAA-705 / NCIMB 13946 / BJ001) (Methylobacterium populi).